A 1179-amino-acid chain; its full sequence is Integrin alpha-1 (1179 aa).

The N-terminal stretch at 1–28 is a signal peptide; the sequence is MAPRPRARPGVAVACCWLLTVVLRCCVS. Topologically, residues 29 to 1141 are extracellular; it reads FNVDVKNSMT…SKDGLPGRVP (1113 aa). Residues 30-91 form an FG-GAP 1 repeat; sequence NVDVKNSMTF…CPVGRGESLP (62 aa). An N-linked (GlcNAc...) asparagine glycan is attached at asparagine 74. Cysteine 82 and cysteine 92 are joined by a disulfide. Asparagine 100, asparagine 105, asparagine 112, asparagine 217, asparagine 317, asparagine 341, asparagine 402, asparagine 418, and asparagine 460 each carry an N-linked (GlcNAc...) asparagine glycan. An FG-GAP 2 repeat occupies 101–160; it reads TSIPNVTEVKENMTFGSTLVTNPNGGFLACGPLYAYRCGHLHYTTGICSDVSPTFQVVNS. One can recognise a VWFA domain in the interval 161–360; sequence IAPVQECSTQ…IVKTLGERIF (200 aa). Residues 365 to 417 form an FG-GAP 3 repeat; that stretch reads TADQSAASFEMEMSQTGFSAHYSQDWVMLGAVGAYDWNGTVVMQKASQIIIPR. FG-GAP repeat units lie at residues 422 to 475, 476 to 538, 557 to 615, and 619 to 679; these read NVES…DGNI, KILQ…RFEY, SCTT…TIRK, and QRIP…FEPN. 4 residues coordinate Ca(2+): aspartate 498, aspartate 500, aspartate 502, and aspartate 506. The N-linked (GlcNAc...) asparagine glycan is linked to asparagine 532. Ca(2+) is bound by residues aspartate 580, asparagine 582, aspartate 584, aspartate 588, aspartate 642, asparagine 644, aspartate 646, and aspartate 650. Cysteine 688 and cysteine 697 form a disulfide bridge. N-linked (GlcNAc...) asparagine glycosylation is found at asparagine 699, asparagine 748, and asparagine 780. A disulfide bond links cysteine 703 and cysteine 756. Cysteine 808 and cysteine 814 form a disulfide bridge. Asparagine 840, asparagine 883, asparagine 908, asparagine 915, asparagine 939, asparagine 966, asparagine 974, and asparagine 1008 each carry an N-linked (GlcNAc...) asparagine glycan. A disulfide bridge links cysteine 878 with cysteine 886. 2 disulfide bridges follow: cysteine 1030–cysteine 1062 and cysteine 1065–cysteine 1072. Asparagine 1073, asparagine 1083, asparagine 1102, and asparagine 1113 each carry an N-linked (GlcNAc...) asparagine glycan. Residues 1142-1164 form a helical membrane-spanning segment; the sequence is LWVILLSAFAGLLLLMLLILALW. The Cytoplasmic portion of the chain corresponds to 1165-1179; sequence KIGFFKRPLKKKMEK. Positions 1167 to 1171 match the GFFKR motif motif; that stretch reads GFFKR.

This sequence belongs to the integrin alpha chain family. As to quaternary structure, heterodimer of an alpha and a beta subunit. Alpha-1 associates with beta-1. Interacts with RAB21. Interacts (via cytoplasmic domain) with PTPN2; activates PTPN2 phosphatase activity towards EGFR and negatively regulates EGF signaling.

It is found in the membrane. In terms of biological role, integrin alpha-1/beta-1 is a receptor for laminin and collagen. It recognizes the proline-hydroxylated sequence G-F-P-G-E-R in collagen. Involved in anchorage-dependent, negative regulation of EGF-stimulated cell growth. The polypeptide is Integrin alpha-1 (ITGA1) (Homo sapiens (Human)).